The primary structure comprises 252 residues: Tabinhibitin 9 (252 aa).

The signal sequence occupies residues 1–23 (MTSNLYYVLISPYSLAYMVQYRS). The short motif at 32–34 (RGD) is the Cell attachment site element. Residues 63 to 207 (YIRSTMCEIM…KARAFFTCNF (145 aa)) enclose the SCP domain.

The protein belongs to the CRISP family. Expressed in salivary glands.

It localises to the secreted. In terms of biological role, inhibits platelet aggregation induced by all agonists tested (ADP, arachidonic acid, the thromboxane A2 analog U46619, thrombin, and snake venom snaclecs (TMVA that activates platelet through GPIB, and stejnulxin that specifically acts through GPVI (GP6))). May act by competing with fibrinogen for binding to glycoprotein IIb/IIIa (ITGA2B/ITGB3). This is Tabinhibitin 9 from Tabanus yao (Horsefly).